The sequence spans 997 residues: Mannuronan C5-epimerase AlgE2 (997 aa).

PbH1 repeat units lie at residues 133–155, 157–179, 180–202, 204–226, 257–279, 280–315, and 320–359; these read DRDVTLERVEIREMSGYGFDPHE, TINLTIRDSVAHDNGLDGFVADF, QIGGVFENNVSYNNDRHGFNIVT, TNDFVLSNNVAYGNGGAGLVVQR, AHDVTLQNAEIYGNGLYGVRVYG, AEDVQILDNYIHDNSQNGSYAEILLQSYDDTAGVSG, and TTGTWIEGNTIVGSANSTYGIQERDDGTDYSSLYANSVSN. Hemolysin-type calcium-binding repeat units follow at residues 388–403, 406–422, 424–439, 557–573, 574–591, 696–711, 713–730, 828–839, 846–862, and 864–880; these read GTAGNDTLGGSDAHET, GLDGNDRLNGGAGNDIL, GGAGRDNLTGGAGADL, GHAGNDTLDGGAGDDIL, VGGAGRDSLTGGAGADVF, GSAGNDSLQGTAADEV, HGGGGRDTLAGGAGADVF, GGDGNDTLSGSS, GGVGNDSLDGGAGNDIL, and GGAGRDTLSGGSGSDIF.

Belongs to the D-mannuronate C5-epimerase family. Ca(2+) is required as a cofactor.

The protein resides in the secreted. It catalyses the reaction [(1-&gt;4)-beta-D-mannuronosyl](n) = [alginate](n). The protein operates within glycan biosynthesis; alginate biosynthesis. Inhibited by zinc. Functionally, converts beta-D-mannuronic acid (M) to alpha-L-guluronic acid (G), producing a polymer with gel-forming capacity, required for the formation of the cyst coat. The polypeptide is Mannuronan C5-epimerase AlgE2 (Azotobacter vinelandii).